A 529-amino-acid chain; its full sequence is Peptide chain release factor 3 (529 aa).

A tr-type G domain is found at 11 to 280 (AKRRTFAIIS…GLVEWAPAPM (270 aa)). Residues 20–27 (SHPDAGKT), 88–92 (DTPGH), and 142–145 (NKLD) contribute to the GTP site.

This sequence belongs to the TRAFAC class translation factor GTPase superfamily. Classic translation factor GTPase family. PrfC subfamily.

It localises to the cytoplasm. Increases the formation of ribosomal termination complexes and stimulates activities of RF-1 and RF-2. It binds guanine nucleotides and has strong preference for UGA stop codons. It may interact directly with the ribosome. The stimulation of RF-1 and RF-2 is significantly reduced by GTP and GDP, but not by GMP. The polypeptide is Peptide chain release factor 3 (Salmonella arizonae (strain ATCC BAA-731 / CDC346-86 / RSK2980)).